The chain runs to 2000 residues: E3 ubiquitin-protein ligase TTC3 (2000 aa).

Residues 20–249 are interaction with POLG; sequence MDDFAEGGLS…RHSCMQCVKQ (230 aa). 2 TPR repeats span residues 250–283 and 284–317; these read GELM…RPEN and HLLY…KNTW. Position 397 is a phosphoserine (serine 397). The disordered stretch occupies residues 442–478; that stretch reads CDCHPEFLPPPSQPPRHKGKQKSRNNESEKPSSNSQV. 2 TPR repeats span residues 556-592 and 596-629; these read VLVV…YPNE and CLAY…ICRL. A disordered region spans residues 804 to 828; the sequence is AQERMEEDLRESNPPKPEEPEETVE. The residue at position 1029 (serine 1029) is a Phosphoserine. 5 disordered regions span residues 1041-1087, 1233-1308, 1423-1448, 1806-1839, and 1894-1947; these read NKGK…GPFA, FQPD…PEDA, QSST…SSDS, LEVK…QSQK, and EEQK…VPAP. The span at 1059 to 1070 shows a compositional bias: polar residues; it reads GTASVTPSSETV. The residue at position 1080 (serine 1080) is a Phosphoserine. Low complexity predominate over residues 1268-1277; the sequence is DSDSSSGSAS. The segment covering 1829–1839 has biased composition (polar residues); that stretch reads GQATRSSQSQK. Over residues 1894–1911 the composition is skewed to basic and acidic residues; it reads EEQKKKKPNPGKDKKTSE. A compositionally biased stretch (low complexity) spans 1912–1934; it reads AHPAASVSKSSPSPPLAAAGPSA. The RING-type; atypical zinc-finger motif lies at 1952 to 1991; the sequence is CQICHEIFKSKNMRVLKCGHKFHKGCFKQWLKGQSTCPTC.

As to quaternary structure, interacts (when phosphorylated on Ser-397) with AKT1, AKT2 and AKT3 (when phosphorylated). Interacts with CIT. Interacts with POLG. Interacts with HSP70. Interacts with SMURF2. In terms of processing, phosphorylation on Ser-397 by Akt is required for ubiquitin ligase activity. Proteolytically cleaved into differently sized N- and C-terminal fragments.

The protein localises to the nucleus. It localises to the cytoplasm. Its subcellular location is the golgi apparatus. It carries out the reaction S-ubiquitinyl-[E2 ubiquitin-conjugating enzyme]-L-cysteine + [acceptor protein]-L-lysine = [E2 ubiquitin-conjugating enzyme]-L-cysteine + N(6)-ubiquitinyl-[acceptor protein]-L-lysine.. It functions in the pathway protein modification; protein ubiquitination. In terms of biological role, E3 ubiquitin-protein ligase which catalyzes the formation of 'Lys-48'-polyubiquitin chains. Mediates the ubiquitination and subsequent degradation of phosphorylated Akt (AKT1, AKT2 and AKT3) in the nucleus. Acts as a terminal regulator of Akt signaling after activation; its phosphorylation by Akt, which is a prerequisite for ubiquitin ligase activity, suggests the existence of a regulation mechanism required to control Akt levels after activation. Positively regulates TGFB1-induced epithelial-mesenchymal transition and myofibroblast differentiation by mediating the ubiquitination and subsequent degradation of SMURF2. Regulates neuronal differentiation by regulating actin remodeling and Golgi organization via a signaling cascade involving RHOA, CIT and ROCK. Inhibits cell proliferation. In Rattus norvegicus (Rat), this protein is E3 ubiquitin-protein ligase TTC3.